Consider the following 373-residue polypeptide: Sodium-dependent organic anion transporter (373 aa).

Polar residues predominate over residues 1–15 (MSTDCAGNSTCPVNS). The disordered stretch occupies residues 1–21 (MSTDCAGNSTCPVNSTEEDPP). The Extracellular portion of the chain corresponds to 1–32 (MSTDCAGNSTCPVNSTEEDPPVGMEGHANLKL). Residues Asn-8 and Asn-14 are each glycosylated (N-linked (GlcNAc...) asparagine). A helical transmembrane segment spans residues 33-53 (LFTVLSAVMVGLVMFSFGCSV). Over 54-67 (ESQKLWLHLRRPWG) the chain is Cytoplasmic. Residues 68–88 (IAVGLLSQFGLMPLTAYLLAI) traverse the membrane as a helical segment. Residues 89–97 (GFGLKPFQA) lie on the Extracellular side of the membrane. Residues 98 to 118 (IAVLMMGSCPGGTISNVLTFW) form a helical membrane-spanning segment. Residues 119 to 126 (VDGDMDLS) lie on the Cytoplasmic side of the membrane. A helical membrane pass occupies residues 127-147 (ISMTTCSTVAALGMMPLCLYI). Residues 148–157 (YTRSWTLTQN) lie on the Extracellular side of the membrane. The chain crosses the membrane as a helical span at residues 158-178 (LVIPYQSIGITLVSLVVPVAS). Topologically, residues 179-195 (GVYVNYRWPKQATVILK) are cytoplasmic. The chain crosses the membrane as a helical span at residues 196-216 (VGAILGGMLLLVVAVTGMVLA). Residues 217 to 224 (KGWNTDVT) lie on the Extracellular side of the membrane. The chain crosses the membrane as a helical span at residues 225-245 (LLVISCIFPLVGHVTGFLLAF). Residues 246–265 (LTHQSWQRCRTISIETGAQN) are Cytoplasmic-facing. A helical membrane pass occupies residues 266 to 283 (IQLCIAMLQLSFSAEYLV). Residue Gln-284 is a topological domain, extracellular. A helical membrane pass occupies residues 285–305 (LLNFALAYGLFQVLHGLLIVA). Over 306 to 373 (AYQAYKRRQK…ELTSHIPSCE (68 aa)) the chain is Cytoplasmic.

It belongs to the bile acid:sodium symporter (BASS) (TC 2.A.28) family. In terms of processing, glycosylated. As to expression, highest expression in lung and testis, moderate expression in heart, bladder and skin, and low expression in blood, liver, stomach, small intestine, spleen, kidney, adrenal gland, seminal vesicle, preputial gland, coagulating gland, lacrimal gland/eye, and brain.

The protein resides in the membrane. The enzyme catalyses estrone 3-sulfate(out) + 2 Na(+)(out) = estrone 3-sulfate(in) + 2 Na(+)(in). It catalyses the reaction 17beta-estradiol 3-sulfate(out) + 2 Na(+)(out) = 17beta-estradiol 3-sulfate(in) + 2 Na(+)(in). The catalysed reaction is dehydroepiandrosterone 3-sulfate(out) + 2 Na(+)(out) = dehydroepiandrosterone 3-sulfate(in) + 2 Na(+)(in). It carries out the reaction androst-5-ene-diol 3-sulfate(out) + 2 Na(+)(out) = androst-5-ene-diol 3-sulfate(in) + 2 Na(+)(in). The enzyme catalyses pregnenolone sulfate(out) + 2 Na(+)(out) = pregnenolone sulfate(in) + 2 Na(+)(in). It catalyses the reaction taurolithocholate 3-sulfate(out) + 2 Na(+)(out) = taurolithocholate 3-sulfate(in) + 2 Na(+)(in). The catalysed reaction is androsterone 3alpha-sulfate(out) + 2 Na(+)(out) = androsterone 3alpha-sulfate(in) + 2 Na(+)(in). It carries out the reaction 5alpha-dihydrotestosterone sulfate(out) + 2 Na(+)(out) = 5alpha-dihydrotestosterone sulfate(in) + 2 Na(+)(in). The enzyme catalyses 17beta-estradiol 17-sulfate(out) + 2 Na(+)(out) = 17beta-estradiol 17-sulfate(in) + 2 Na(+)(in). It catalyses the reaction 17alpha-hydroxypregnenolone 3-sulfate(out) + 2 Na(+)(out) = 17alpha-hydroxypregnenolone 3-sulfate(in) + 2 Na(+)(in). The catalysed reaction is epiandrosterone 3-sulfate(out) + 2 Na(+)(out) = epiandrosterone 3-sulfate(in) + 2 Na(+)(in). It carries out the reaction epitestosterone 17-sulfate(out) + 2 Na(+)(out) = epitestosterone 17-sulfate(in) + 2 Na(+)(in). The enzyme catalyses testosterone 17-sulfate(out) + 2 Na(+)(out) = testosterone 17-sulfate(in) + 2 Na(+)(in). It catalyses the reaction 16alpha-hydroxydehydroepiandrosterone 3-sulfate(out) + 2 Na(+)(out) = 16alpha-hydroxydehydroepiandrosterone 3-sulfate(in) + 2 Na(+)(in). Functionally, transports sulfoconjugated steroid hormones from the extracellular compartment into the cytosol in a sodium-dependent manner without hydrolysis. Steroid sulfate hormones are commonly considered to be biologically inactive metabolites, that may be activated by steroid sulfatases into free steroids. May play an important role by delivering sulfoconjugated steroids to specific target cells in reproductive organs. May play a role transporting the estriol precursor 16alpha-hydroxydehydroepiandrosterone 3-sulfate (16a-OH-DHEAS) at the fetal blood vessel endothelium. Can also transport other sulfoconjugated molecules such as taurolithocholic acid-3-sulfate and sulfoconjugated pyrenes. This chain is Sodium-dependent organic anion transporter (Slc10a6), found in Mus musculus (Mouse).